A 149-amino-acid chain; its full sequence is MKVILKSDIANVGRQGEIKEVSAGFARNYLIPQSLVMEANDLNLKIWKRERGILEKHREEIINSAREIAFKMEASKFTAKVKIGENGKIFGSITTATLVKIFEDNGFKVNKRDIILSDNIKEIGDHEISVRFHPEVVAKIKLSVINEKE.

It belongs to the bacterial ribosomal protein bL9 family.

Functionally, binds to the 23S rRNA. In Endomicrobium trichonymphae, this protein is Large ribosomal subunit protein bL9.